Here is a 22-residue protein sequence, read N- to C-terminus: Cysteine protease inhibitor 4 (22 aa).

This sequence belongs to the protease inhibitor I3 (leguminous Kunitz-type inhibitor) family. Tubers.

It localises to the vacuole. Functionally, inhibitor of papain (cysteine protease). Does not inhibit trypsin, chymotrypsin nor elastase (serine proteases). May protect the plant by inhibiting proteases of invading organisms. The polypeptide is Cysteine protease inhibitor 4 (Solanum tuberosum (Potato)).